Consider the following 376-residue polypeptide: ORC1-type DNA replication protein 2 (376 aa).

ATP contacts are provided by residues 73–77 (TGKTS), Tyr209, and Arg221.

This sequence belongs to the CDC6/cdc18 family.

Involved in regulation of DNA replication. In Archaeoglobus fulgidus (strain ATCC 49558 / DSM 4304 / JCM 9628 / NBRC 100126 / VC-16), this protein is ORC1-type DNA replication protein 2 (cdc6-2).